We begin with the raw amino-acid sequence, 148 residues long: Protoporphyrinogen IX oxidase (148 aa).

4 consecutive transmembrane segments (helical) span residues 7-27 (YFLW…AALF), 58-78 (SFIA…MLLI), 86-106 (GGWL…HFYC), and 128-148 (FNEA…VKPF). Heme is bound at residue histidine 15. Lysine 92 serves as a coordination point for heme.

Belongs to the HemJ family. Homodimer. Requires heme b as cofactor.

The protein localises to the cell membrane. It carries out the reaction protoporphyrinogen IX + 3 A = protoporphyrin IX + 3 AH2. It participates in porphyrin-containing compound metabolism; protoporphyrin-IX biosynthesis; protoporphyrin-IX from protoporphyrinogen-IX: step 1/1. In terms of biological role, catalyzes the oxidation of protoporphyrinogen IX to protoporphyrin IX. Is involved in the biosynthesis of tetrapyrrole molecules like heme. Does not use oxygen or artificial electron acceptors such as menadione or benzoquinone. This Helicobacter pylori (strain ATCC 700392 / 26695) (Campylobacter pylori) protein is Protoporphyrinogen IX oxidase.